We begin with the raw amino-acid sequence, 472 residues long: MAGDEAGVTLGQPHLSRQDLATLDVTKLTPLSPEVISRQATINIGTIGHVAHGKSTVVKAISGVHTVRFKNELERNITIKLGYANAKIYKLDDPSCSRPECYRSCGSSTPDEFPTDIPGTKGNFKLVRHVSFVDCPGHDILMATMLNGAAVMDAALLLIAGNESCPQPQTSEHLAAIEIMKLKHILILQNKIDLVKESQAKEQYEQILAFVQGTVAEGAPIIPISAQLKYSIEVVCEYIVKKIPVPLRDFTSEPRLIVIRSFDVNKPGCEVDDLKGGVAGGSILKGVLKVGQEIEVRPGIVSKDSEGKLMCKPIFSKIVSLFAEHNDLQYAAPGGLIGVGTKIDPTLCRADRMVGQVLGAVGALPEIFTELEISYFLLRRLLGVRTEGDKKAAKVQKLSKNEVLMVNIGSLSTGGRVSAVKADLGKIVLTNPVCTEVGEKIALSRRVEKHWRLIGWGQIRRGVTIKPTVDDD.

The residue at position 2 (alanine 2) is an N-acetylalanine; partial. Residues 39–247 (QATINIGTIG…YIVKKIPVPL (209 aa)) enclose the tr-type G domain. Residues 48–55 (GHVAHGKS) form a G1 region. Residue 51–56 (AHGKST) participates in GTP binding. Residues 76–80 (NITIK) form a G2 region. The G3 stretch occupies residues 134 to 137 (DCPG). Residues 190 to 193 (NKID) and 225 to 227 (SAQ) each bind GTP. Residues 190–193 (NKID) form a G4 region. Residues 225-227 (SAQ) are G5. The tract at residues 457 to 469 (GQIRRGVTIKPTV) is interacts with CDC123.

It belongs to the TRAFAC class translation factor GTPase superfamily. Classic translation factor GTPase family. EIF2G subfamily. Eukaryotic translation initiation factor 2 eIF2 is a heterotrimeric complex composed of an alpha (EIF2S1), a beta (EIF2S2) and a gamma (EIF2S3) chain. eIF2 is member of the 43S pre-initiation complex (43S PIC).

The protein resides in the cytoplasm. It localises to the cytosol. It catalyses the reaction GTP + H2O = GDP + phosphate + H(+). Its function is as follows. Member of the eIF2 complex that functions in the early steps of protein synthesis by forming a ternary complex with GTP and initiator tRNA. This complex binds to a 40S ribosomal subunit, followed by mRNA binding to form the 43S pre-initiation complex (43S PIC). Junction of the 60S ribosomal subunit to form the 80S initiation complex is preceded by hydrolysis of the GTP bound to eIF2 and release of an eIF2-GDP binary complex. In order for eIF2 to recycle and catalyze another round of initiation, the GDP bound to eIF2 must exchange with GTP by way of a reaction catalyzed by eIF-2B. In Gallus gallus (Chicken), this protein is Eukaryotic translation initiation factor 2 subunit 3 (EIF2S3).